A 344-amino-acid chain; its full sequence is KRR1 small subunit processome component homolog (344 aa).

A KH domain is found at 126–194 (DIIKIGNLVH…VRDIVLDTMN (69 aa)). Positions 230 to 246 (KNKNISKRKQPKNKKPK) are enriched in basic residues. A disordered region spans residues 230–326 (KNKNISKRKQ…KRAAEDNKVD (97 aa)). Residues 271 to 344 (FLNKEQKQAK…MKANKKKERS (74 aa)) adopt a coiled-coil conformation. The span at 272–303 (LNKEQKQAKRQQERTAKQAEAAKKQDERRNKD) shows a compositional bias: basic and acidic residues.

The protein belongs to the KRR1 family. Monomer. Component of the ribosomal small subunit (SSU) processome.

The protein localises to the nucleus. It is found in the nucleolus. In terms of biological role, required for 40S ribosome biogenesis. Involved in nucleolar processing of pre-18S ribosomal RNA and ribosome assembly. Binds to RNA. Required for female germline development, cell viability during eye development and for survival of dividing cells and epithelial cells during early wing disk development. The protein is KRR1 small subunit processome component homolog of Drosophila mojavensis (Fruit fly).